A 503-amino-acid polypeptide reads, in one-letter code: MSQLKLEEISSVIEEKIKNFELDCDMAEVGKVVSYADGVAKVYGLNGVMSYEVLEFETGDKGVAANLEEDSVGVIVFGFGNNIKEGTSVKRTKSLMKVPVGDAVVGRVLNALGEPIDGKGEIETNEFSLIEQKAPGIMDRKSVHEPLQTGIKAIDALVPIGRGQRELIIGDKQTGKTTVAIDAIINQKGQNVICIYVAIGQKESTVAQVVRKLEEYGAMEYSVVINASASDSAAMQYLAPYSGVAMGEYFRDHARHALIIYDDLSKHAVAYREISLILRRPPGREAFPGDVFYIHSRLLERAAKLCDEKGAGSLTALPIVETQAGDVSAYIPTNIISITDGQIFLETDLFYSGIRPAINVGLSVSRVGGAAQIKATKQVSGTLRLDLAQYRELQAFTQFASDLDEASKKQLERGQRMVEVLKQAPYSPLPIEKQVVIIYAGAKGFLDSVSVKKVVDFEEQLHPFLEAKYPQVLEEIHTKKALDKDLEAMLRKVLEEFKLTYSE.

170 to 177 serves as a coordination point for ATP; it reads GDKQTGKT.

This sequence belongs to the ATPase alpha/beta chains family. As to quaternary structure, F-type ATPases have 2 components, CF(1) - the catalytic core - and CF(0) - the membrane proton channel. CF(1) has five subunits: alpha(3), beta(3), gamma(1), delta(1), epsilon(1). CF(0) has three main subunits: a(1), b(2) and c(9-12). The alpha and beta chains form an alternating ring which encloses part of the gamma chain. CF(1) is attached to CF(0) by a central stalk formed by the gamma and epsilon chains, while a peripheral stalk is formed by the delta and b chains.

The protein localises to the cell inner membrane. The catalysed reaction is ATP + H2O + 4 H(+)(in) = ADP + phosphate + 5 H(+)(out). In terms of biological role, produces ATP from ADP in the presence of a proton gradient across the membrane. The alpha chain is a regulatory subunit. This Helicobacter pylori (strain P12) protein is ATP synthase subunit alpha.